The primary structure comprises 345 residues: Tryptophan--tRNA ligase (345 aa).

ATP is bound by residues 12 to 14 (RPT) and 20 to 21 (GH). The 'HIGH' region motif lies at 13–21 (PTGKLHLGH). Residue D144 coordinates L-tryptophan. ATP-binding positions include 156–158 (GKD), L194, and 202–206 (KMSKS). The 'KMSKS' region motif lies at 202 to 206 (KMSKS).

It belongs to the class-I aminoacyl-tRNA synthetase family. In terms of assembly, homodimer.

The protein localises to the cytoplasm. It carries out the reaction tRNA(Trp) + L-tryptophan + ATP = L-tryptophyl-tRNA(Trp) + AMP + diphosphate + H(+). Functionally, catalyzes the attachment of tryptophan to tRNA(Trp). The chain is Tryptophan--tRNA ligase from Chlamydia caviae (strain ATCC VR-813 / DSM 19441 / 03DC25 / GPIC) (Chlamydophila caviae).